Consider the following 352-residue polypeptide: MASRKEGTGSTATSSSSTGGAVGKGKGKGGSGDSAVKQVQIDGLVVLKIIKHYQEEGQGTEVVQGVLLGLVVEDRLEITNCFPFPQHTEDDADFDEVQYQMEMMRSLRHVNIDHLHVGWYQSTYYGSFVTRALLDSQFSYQHAIEESVVLIYDPIKTAQGSLSLKAYRLTPKLMEVCKEKDFSPEALKKANITFEHMFEEVPIVIKNSHLINVLMWELEKKSAVADKHELLSLASSNHLGKNLQLLMDRVDEMSQDIIKYNTYMRNSSKQQQQKHQYQQRRQQENMQRQSRGEPPLPEEDLSKLFKPHQAPARMDSLLIAGQINTYCQNIKEFTAQNLGKLFMAQALQEYSN.

Residues 1–34 (MASRKEGTGSTATSSSSTGGAVGKGKGKGGSGDS) are disordered. S3 bears the Phosphoserine mark. Over residues 8–19 (TGSTATSSSSTG) the composition is skewed to low complexity. Positions 20–32 (GAVGKGKGKGGSG) are enriched in gly residues. An MPN domain is found at 39–173 (VQIDGLVVLK…LKAYRLTPKL (135 aa)). Phosphoserine is present on S183. The tract at residues 265–300 (RNSSKQQQQKHQYQQRRQQENMQRQSRGEPPLPEED) is disordered. Residues 270–289 (QQQQKHQYQQRRQQENMQRQ) show a composition bias toward low complexity. Residue K303 forms a Glycyl lysine isopeptide (Lys-Gly) (interchain with G-Cter in SUMO2) linkage.

This sequence belongs to the eIF-3 subunit H family. Component of the eukaryotic translation initiation factor 3 (eIF-3) complex, which is composed of 13 subunits: EIF3A, EIF3B, EIF3C, EIF3D, EIF3E, EIF3F, EIF3G, EIF3H, EIF3I, EIF3J, EIF3K, EIF3L and EIF3M. The eIF-3 complex appears to include 3 stable modules: module A is composed of EIF3A, EIF3B, EIF3G and EIF3I; module B is composed of EIF3F, EIF3H, and EIF3M; and module C is composed of EIF3C, EIF3D, EIF3E, EIF3K and EIF3L. EIF3C of module C binds EIF3B of module A and EIF3H of module B, thereby linking the three modules. EIF3J is a labile subunit that binds to the eIF-3 complex via EIF3B. The eIF-3 complex interacts with RPS6KB1 under conditions of nutrient depletion. Mitogenic stimulation leads to binding and activation of a complex composed of MTOR and RPTOR, leading to phosphorylation and release of RPS6KB1 and binding of EIF4B to eIF-3. Interacts with RNF139; the interaction leads to protein translation inhibitions in a ubiquitination-dependent manner. Interacts with DHX33; the interaction is independent of RNA.

It is found in the cytoplasm. In terms of biological role, component of the eukaryotic translation initiation factor 3 (eIF-3) complex, which is required for several steps in the initiation of protein synthesis. The eIF-3 complex associates with the 40S ribosome and facilitates the recruitment of eIF-1, eIF-1A, eIF-2:GTP:methionyl-tRNAi and eIF-5 to form the 43S pre-initiation complex (43S PIC). The eIF-3 complex stimulates mRNA recruitment to the 43S PIC and scanning of the mRNA for AUG recognition. The eIF-3 complex is also required for disassembly and recycling of post-termination ribosomal complexes and subsequently prevents premature joining of the 40S and 60S ribosomal subunits prior to initiation. The eIF-3 complex specifically targets and initiates translation of a subset of mRNAs involved in cell proliferation, including cell cycling, differentiation and apoptosis, and uses different modes of RNA stem-loop binding to exert either translational activation or repression. The protein is Eukaryotic translation initiation factor 3 subunit H (Eif3h) of Rattus norvegicus (Rat).